A 124-amino-acid polypeptide reads, in one-letter code: Large ribosomal subunit protein eL22y (124 aa).

It belongs to the eukaryotic ribosomal protein eL22 family.

The polypeptide is Large ribosomal subunit protein eL22y (RPL22C) (Arabidopsis thaliana (Mouse-ear cress)).